The primary structure comprises 431 residues: Adenylosuccinate synthetase (431 aa).

Residues 12-18 (GDEGKGK) and 40-42 (GHT) each bind GTP. The Proton acceptor role is filled by Asp13. The Mg(2+) site is built by Asp13 and Gly40. IMP-binding positions include 13 to 16 (DEGK), 38 to 41 (NAGH), Thr131, Arg145, Gln225, Thr240, and Arg304. The Proton donor role is filled by His41. Substrate is bound at residue 300–306 (TNTGRRR). GTP contacts are provided by residues Arg306, 332 to 334 (KLD), and 414 to 416 (STS).

This sequence belongs to the adenylosuccinate synthetase family. Homodimer. Mg(2+) is required as a cofactor.

It is found in the cytoplasm. It catalyses the reaction IMP + L-aspartate + GTP = N(6)-(1,2-dicarboxyethyl)-AMP + GDP + phosphate + 2 H(+). It participates in purine metabolism; AMP biosynthesis via de novo pathway; AMP from IMP: step 1/2. Its function is as follows. Plays an important role in the de novo pathway of purine nucleotide biosynthesis. Catalyzes the first committed step in the biosynthesis of AMP from IMP. The protein is Adenylosuccinate synthetase of Methylocella silvestris (strain DSM 15510 / CIP 108128 / LMG 27833 / NCIMB 13906 / BL2).